Reading from the N-terminus, the 523-residue chain is Pentatricopeptide repeat-containing protein At3g21470 (523 aa).

13 PPR repeats span residues 10–43, 44–79, 80–114, 115–141, 143–173, 176–210, 211–237, 238–272, 273–307, 308–338, 339–373, 374–408, and 409–439; these read GEFH…RGVY, FPGW…GVCS, DVMV…NVAT, WNAM…ISVC, NTVT…MPFE, NVKA…NAFV, WSLM…VFAR, DLVI…GYEP, DAVT…GIEL, NQFV…ISVR, SVAC…DLKP, DEIT…DVKP, and NVKH…MHVK. Residues 444 to 523 form a type E motif region; that stretch reads VLGALLGACK…SPGLSSLVLT (80 aa).

Belongs to the PPR family. PCMP-E subfamily.

This is Pentatricopeptide repeat-containing protein At3g21470 (PCMP-E29) from Arabidopsis thaliana (Mouse-ear cress).